The chain runs to 257 residues: Diaminopimelate epimerase (257 aa).

3 residues coordinate substrate: Asn-13, Gln-46, and Asn-66. Cys-75 functions as the Proton donor in the catalytic mechanism. Substrate-binding positions include 76 to 77 (GN), Asn-145, Asn-175, and 193 to 194 (ER). Catalysis depends on Cys-202, which acts as the Proton acceptor. 203–204 (GS) serves as a coordination point for substrate.

Belongs to the diaminopimelate epimerase family. Homodimer.

Its subcellular location is the cytoplasm. The enzyme catalyses (2S,6S)-2,6-diaminopimelate = meso-2,6-diaminopimelate. Its pathway is amino-acid biosynthesis; L-lysine biosynthesis via DAP pathway; DL-2,6-diaminopimelate from LL-2,6-diaminopimelate: step 1/1. Functionally, catalyzes the stereoinversion of LL-2,6-diaminopimelate (L,L-DAP) to meso-diaminopimelate (meso-DAP), a precursor of L-lysine and an essential component of the bacterial peptidoglycan. The chain is Diaminopimelate epimerase from Gluconobacter oxydans (strain 621H) (Gluconobacter suboxydans).